A 188-amino-acid polypeptide reads, in one-letter code: Augmin complex subunit dgt4 (188 aa).

A coiled-coil region spans residues 141–163; the sequence is QREFAQNQEALRSLRTAVDGLEN.

Component of the augmin complex composed of dgt2, dgt3, dgt4, dgt5, dgt6, msd1, msd5 and wac. The complex interacts directly or indirectly with microtubules and is required for centrosome-independent generation of spindle microtubules.

Its subcellular location is the cytoplasm. It localises to the cytoskeleton. It is found in the spindle. As part of the augmin complex, plays a role in centrosome-independent generation of spindle microtubules. The complex is required for mitotic spindle assembly through its involvement in localizing gamma-tubulin to spindle microtubules. The chain is Augmin complex subunit dgt4 from Drosophila melanogaster (Fruit fly).